Here is a 1235-residue protein sequence, read N- to C-terminus: Serine/threonine-protein kinase TAO2 (1235 aa).

Serine 9 bears the Phosphoserine mark. Residues 28–281 (FSDLREIGHG…SEVLLKHRFV (254 aa)) enclose the Protein kinase domain. Residues 34 to 42 (IGHGSFGAV) and lysine 57 contribute to the ATP site. Aspartate 151 (proton acceptor) is an active-site residue. Serine 181 bears the Phosphoserine mark. Residues 318–457 (QEAPNGPGAE…TSTTSSARRR (140 aa)) form a disordered region. The segment covering 350-374 (SSHSVPSMSISASSQSSSVNSLADA) has biased composition (low complexity). Residues 375–393 (SDNEEEEEEEEEEEEEEEG) are compositionally biased toward acidic residues. The segment covering 394-409 (PEAREMAMMQEGEHTV) has biased composition (basic and acidic residues). Phosphoserine is present on serine 414. Coiled-coil stretches lie at residues 486-547 (SALR…RRHQ) and 574-601 (KELAALLEAQKRTYKLRKEQLKEELQEN). The residue at position 656 (serine 656) is a Phosphoserine. Positions 681–713 (LRQHEATRELELRQLQAVQRTRAELTRLQHQTE) form a coiled coil. 3 disordered regions span residues 732-777 (HAAQ…QPCS), 804-835 (KEGATLEPKQQRILGEESGAPSPSPQKHGSLV), and 891-939 (QGPA…RPCP). Residues 766-777 (NTGTPIEQQPCS) are compositionally biased toward polar residues. A phosphoserine mark is found at serine 777, serine 825, and serine 827. Acidic residues predominate over residues 899–908 (PEEEEEEEEG). The segment covering 924–934 (PDIPPEPPPTH) has biased composition (pro residues). A run of 2 helical transmembrane segments spans residues 965–985 (LLPLLLLLLLPLLAAQGGGGL) and 987–1007 (AALLALEVGLVGLGASYLLLC). Residues histidine 1011 and glycine 1031 each carry the phosphoserine modification. The next 3 helical transmembrane spans lie at 1012–1032 (LPSSLFLLLAQGTALGAVLGL), 1043–1063 (LGLGAAWLLAWPGLALPLVAM), and 1166–1186 (QGLASHLPPWAIHTLASWGLL). Positions 1198–1235 (LPRSQRQLGPPASRQPLPGTLAGRRSRTRQSRALPPWR) are disordered.

It belongs to the protein kinase superfamily. STE Ser/Thr protein kinase family. STE20 subfamily. In terms of assembly, interacts with MAP2K3 and MAP2K6. Self-associates. Interacts with tubulins through the C-terminal domain. Interacts with MAP3K7 and interferes with MAP3K7-binding to CHUK and thus prevents NF-kappa-B activation. Isoform 2 interacts with PCDH8; this complex may also include CDH2. Requires Mg(2+) as cofactor. In terms of processing, isoforms 1 and 2 are autophosphorylated. Post-translationally, C-terminal cleavage of isoform 1 and subsequent nuclear localization requires CASP9 activity. Autophosphorylated. Phosphorylated by ATM. In terms of processing, phosphorylated on Ser-1031 by MAPK14. This phosphorylation is required PCDH8 for endocytosis. In terms of tissue distribution, ubiquitously expressed, with a higher level of expression in testis and brain.

Its subcellular location is the cytoplasmic vesicle membrane. The protein localises to the cytoplasm. It is found in the cytoskeleton. The protein resides in the nucleus. It localises to the cell projection. Its subcellular location is the dendrite. The enzyme catalyses L-seryl-[protein] + ATP = O-phospho-L-seryl-[protein] + ADP + H(+). The catalysed reaction is L-threonyl-[protein] + ATP = O-phospho-L-threonyl-[protein] + ADP + H(+). Selectively inhibited by the enantiopure organoruthenium inhibitor 9E1. Activated following arsenic trioxide (As(2)O(3)) treatment. In terms of biological role, serine/threonine-protein kinase involved in different processes such as membrane blebbing and apoptotic bodies formation DNA damage response and MAPK14/p38 MAPK stress-activated MAPK cascade. Phosphorylates itself, MBP, activated MAPK8, MAP2K3, MAP2K6 and tubulins. Activates the MAPK14/p38 MAPK signaling pathway through the specific activation and phosphorylation of the upstream MAP2K3 and MAP2K6 kinases. In response to DNA damage, involved in the G2/M transition DNA damage checkpoint by activating the p38/MAPK14 stress-activated MAPK cascade, probably by mediating phosphorylation of upstream MAP2K3 and MAP2K6 kinases. Isoform 1, but not isoform 2, plays a role in apoptotic morphological changes, including cell contraction, membrane blebbing and apoptotic bodies formation. This function, which requires the activation of MAPK8/JNK and nuclear localization of C-terminally truncated isoform 1, may be linked to the mitochondrial CASP9-associated death pathway. Isoform 1 binds to microtubules and affects their organization and stability independently of its kinase activity. Prevents MAP3K7-mediated activation of CHUK, and thus NF-kappa-B activation, but not that of MAPK8/JNK. May play a role in the osmotic stress-MAPK8 pathway. Isoform 2, but not isoform 1, is required for PCDH8 endocytosis. Following homophilic interactions between PCDH8 extracellular domains, isoform 2 phosphorylates and activates MAPK14/p38 MAPK which in turn phosphorylates isoform 2. This process leads to PCDH8 endocytosis and CDH2 cointernalization. Both isoforms are involved in MAPK14 phosphorylation. This is Serine/threonine-protein kinase TAO2 (TAOK2) from Homo sapiens (Human).